The following is a 131-amino-acid chain: Large ribosomal subunit protein bL19 (131 aa).

The segment at 110–131 (KSARIAERTDDRAKKAKATAAE) is disordered. Residues 113 to 122 (RIAERTDDRA) are compositionally biased toward basic and acidic residues.

It belongs to the bacterial ribosomal protein bL19 family.

This protein is located at the 30S-50S ribosomal subunit interface and may play a role in the structure and function of the aminoacyl-tRNA binding site. In Azorhizobium caulinodans (strain ATCC 43989 / DSM 5975 / JCM 20966 / LMG 6465 / NBRC 14845 / NCIMB 13405 / ORS 571), this protein is Large ribosomal subunit protein bL19.